The following is a 149-amino-acid chain: MVSHLKKTRKLRGHVSHGHGRVGKHRKGGCRGGRGKAGGMHHHRILMEKWHPGYYGKLGMRTFHLKKNPLHCPVVNIDKLWSLVSDATRQKYAEDKKKVPVIDVTKAGFFKVLGKGRLPNQPVVVKAKYFSKTAERRIVAVGGACVLTA.

Over residues 1 to 29 (MVSHLKKTRKLRGHVSHGHGRVGKHRKGG) the composition is skewed to basic residues. A disordered region spans residues 1–38 (MVSHLKKTRKLRGHVSHGHGRVGKHRKGGCRGGRGKAG).

This sequence belongs to the universal ribosomal protein uL15 family.

This is Large ribosomal subunit protein uL15 (RPL27A) from Tetrahymena thermophila.